A 552-amino-acid polypeptide reads, in one-letter code: Berberine bridge enzyme-like 6 (552 aa).

An N-terminal signal peptide occupies residues 1 to 16; the sequence is MKEAFVFLLCLTNKFP. Cys56 and Cys119 form a disulfide bridge. N-linked (GlcNAc...) asparagine glycans are attached at residues Asn76, Asn161, Asn280, Asn364, Asn419, and Asn463. In terms of domain architecture, FAD-binding PCMH-type spans 93-270; that stretch reads FSSPNFKKLL…LSWKINLVEV (178 aa). Positions 134–196 form a cross-link, 6-(S-cysteinyl)-8alpha-(pros-histidyl)-FAD (His-Cys); it reads HDNEGFSYMS…QTLAFPAGVC (63 aa).

This sequence belongs to the oxygen-dependent FAD-linked oxidoreductase family. FAD serves as cofactor. In terms of processing, the FAD cofactor is bound via a bicovalent 6-S-cysteinyl, 8alpha-N1-histidyl FAD linkage.

It localises to the secreted. The protein localises to the cell wall. Probable flavin-dependent oxidoreductase. In Arabidopsis thaliana (Mouse-ear cress), this protein is Berberine bridge enzyme-like 6.